Consider the following 421-residue polypeptide: Eukaryotic translation initiation factor 3 subunit E (421 aa).

The PCI domain occupies 215 to 394; that stretch reads FFQNDTKGKD…STVILNHPSV (180 aa).

It belongs to the eIF-3 subunit E family. In terms of assembly, component of the eukaryotic translation initiation factor 3 (eIF-3) complex.

It localises to the cytoplasm. In terms of biological role, component of the eukaryotic translation initiation factor 3 (eIF-3) complex, which is involved in protein synthesis of a specialized repertoire of mRNAs and, together with other initiation factors, stimulates binding of mRNA and methionyl-tRNAi to the 40S ribosome. The eIF-3 complex specifically targets and initiates translation of a subset of mRNAs involved in cell proliferation. This chain is Eukaryotic translation initiation factor 3 subunit E, found in Yarrowia lipolytica (strain CLIB 122 / E 150) (Yeast).